The chain runs to 189 residues: MDSRQQRPQRKTLQWQLAQEQRQQSPPQGLAVASSQPDTKSKPQDDLQTQDWVCEPQELRRPGSRWNISIDERRRLALQRMQERTDTARAPSGDPLGLHPEGQQTETSPSTQSVPTPPLQACETMADPLQDIAHVLAELMSEGVERDVLISQPLRSTENSNAFQDFLAQDAPLWKDENFEAQTSRWPHS.

The tract at residues 1–120 is disordered; it reads MDSRQQRPQR…TQSVPTPPLQ (120 aa). The segment covering 14–24 has biased composition (low complexity); it reads QWQLAQEQRQQ. The span at 70–87 shows a compositional bias: basic and acidic residues; the sequence is IDERRRLALQRMQERTDT. Residues 103-114 show a composition bias toward low complexity; that stretch reads QQTETSPSTQSV.

As to expression, mainly expressed in spermatocytes and spermatids in testis.

Its subcellular location is the cytoplasm. The protein resides in the cytoplasmic vesicle. The protein localises to the secretory vesicle. It is found in the acrosome. The protein is Testis-expressed protein 22 (Tex22) of Mus musculus (Mouse).